A 280-amino-acid chain; its full sequence is Nucleotide-binding protein Dgeo_0723 (280 aa).

Position 8-15 (8-15 (GLSGSGKS)) interacts with ATP. Residue 57-60 (DART) coordinates GTP.

This sequence belongs to the RapZ-like family.

In terms of biological role, displays ATPase and GTPase activities. The sequence is that of Nucleotide-binding protein Dgeo_0723 from Deinococcus geothermalis (strain DSM 11300 / CIP 105573 / AG-3a).